The primary structure comprises 577 residues: 5'-AMP-activated protein kinase subunit gamma (577 aa).

The segment at 45–226 is disordered; it reads QSEGVGGGEL…NNNNSNSNNN (182 aa). Residues 58–88 are compositionally biased toward low complexity; sequence NNNTTNNNTPTNTTTTTNTNTTTMNNSNNNN. 2 stretches are compositionally biased toward polar residues: residues 106–121 and 138–155; these read SIEQPSPSFISSSQDG and ESQSPPNGDNQILNNNNM. Residues 165–226 are compositionally biased toward low complexity; it reads STDNKSSTNT…NNNNSNSNNN (62 aa). 4 consecutive CBS domains span residues 279–341, 364–426, 438–499, and 517–574; these read VIPI…KKPK, ERPS…QLPE, IGTF…LSPS, and QRPE…DVKS.

It belongs to the 5'-AMP-activated protein kinase gamma subunit family.

Functionally, AMPK may be responsible for the regulation of fatty acid synthesis by phosphorylation of acetyl-CoA carboxylase. The chain is 5'-AMP-activated protein kinase subunit gamma (prkag) from Dictyostelium discoideum (Social amoeba).